The chain runs to 175 residues: MATIAELKAVLKDTLEKRGALRQIKARIRAEVFNALDDQSEPRPPLCHENLLINELIREYLEFNKYKYSASVLTAEAGQPEVPLDRQFLVKELNIVEDANGKSVPLLYGIISHFLHRGKEESTQSTLPKVSLLSYPRQNLAKPSTERNQKDRIPEPGRMAGTSIEEPLVLQSIKR.

The tract at residues 1–104 (MATIAELKAV…IVEDANGKSV (104 aa)) is necessary and sufficient for homooligomerization and localization to centrosomes and pericentriolar satellites. The LisH domain maps to 49–81 (ENLLINELIREYLEFNKYKYSASVLTAEAGQPE). The disordered stretch occupies residues 137–166 (RQNLAKPSTERNQKDRIPEPGRMAGTSIEE). The segment covering 144 to 155 (STERNQKDRIPE) has biased composition (basic and acidic residues).

This sequence belongs to the CEP43 family. As to quaternary structure, homooligomer; probably required for localization to centrosomes.

Its subcellular location is the cell projection. It is found in the cilium. The protein localises to the cytoplasm. The protein resides in the cytoskeleton. It localises to the cilium basal body. Its subcellular location is the microtubule organizing center. It is found in the centrosome. The protein localises to the cytoplasmic granule. The protein resides in the centriolar satellite. In terms of biological role, involved in the biogenesis of cilia. Required for the recruitment of PLK1 to centrosomes and S phase progression. The chain is Centrosomal protein 20 (CEP20) from Gallus gallus (Chicken).